The following is a 163-amino-acid chain: Photosystem II extrinsic protein V (163 aa).

Residues 1-26 (MFRRLIGVVVATALLTFQLIVGSATA) form the signal peptide. Cys63, Cys66, His67, and His118 together coordinate heme c.

The protein belongs to the cytochrome c family. PsbV subfamily. As to quaternary structure, PSII is composed of 1 copy each of membrane proteins PsbA, PsbB, PsbC, PsbD, PsbE, PsbF, PsbH, PsbI, PsbJ, PsbK, PsbL, PsbM, PsbT, PsbX, PsbY, PsbZ, Psb30/Ycf12, peripheral proteins PsbO, CyanoQ (PsbQ), PsbU, PsbV and a large number of cofactors. It forms dimeric complexes. Heme c serves as cofactor.

The protein localises to the cellular thylakoid membrane. Functionally, one of the extrinsic, lumenal subunits of photosystem II (PSII). PSII is a light-driven water plastoquinone oxidoreductase, using light energy to abstract electrons from H(2)O, generating a proton gradient subsequently used for ATP formation. The extrinsic proteins stabilize the structure of photosystem II oxygen-evolving complex (OEC), the ion environment of oxygen evolution and protect the OEC against heat-induced inactivation. Low-potential cytochrome c that plays a role in the OEC of PSII. This is Photosystem II extrinsic protein V from Nostoc sp. (strain PCC 7120 / SAG 25.82 / UTEX 2576).